A 194-amino-acid polypeptide reads, in one-letter code: ATP-dependent Clp protease proteolytic subunit (194 aa).

Ser98 serves as the catalytic Nucleophile. The active site involves His123.

It belongs to the peptidase S14 family. As to quaternary structure, fourteen ClpP subunits assemble into 2 heptameric rings which stack back to back to give a disk-like structure with a central cavity, resembling the structure of eukaryotic proteasomes.

It is found in the cytoplasm. The enzyme catalyses Hydrolysis of proteins to small peptides in the presence of ATP and magnesium. alpha-casein is the usual test substrate. In the absence of ATP, only oligopeptides shorter than five residues are hydrolyzed (such as succinyl-Leu-Tyr-|-NHMec, and Leu-Tyr-Leu-|-Tyr-Trp, in which cleavage of the -Tyr-|-Leu- and -Tyr-|-Trp bonds also occurs).. In terms of biological role, cleaves peptides in various proteins in a process that requires ATP hydrolysis. Has a chymotrypsin-like activity. Plays a major role in the degradation of misfolded proteins. The chain is ATP-dependent Clp protease proteolytic subunit from Ruminiclostridium cellulolyticum (strain ATCC 35319 / DSM 5812 / JCM 6584 / H10) (Clostridium cellulolyticum).